The primary structure comprises 576 residues: RNA-directed RNA polymerase subunit beta (576 aa).

Residues 259 to 391 enclose the RdRp catalytic domain; the sequence is RLARDGSLLN…PNRKKTFCDG (133 aa). Asp-274, Asp-359, and Asp-360 together coordinate Mg(2+).

In terms of assembly, homodimer; the replicase complex can dimerize. Part of the viral RNA-dependent RNA polymerase complex, the other subunits are the host ribosomal protein S1, EF-Tu and EF-Ts. S1 is needed for the initiation of genomic RNA (+)-strand replication. Requires Mg(2+) as cofactor.

It carries out the reaction RNA(n) + a ribonucleoside 5'-triphosphate = RNA(n+1) + diphosphate. In terms of biological role, this is the catalytic subunit of the viral RNA-dependent RNA polymerase complex. This complex is involved in viral RNA replication that produces (+)-stranded genomes via a complementary, (-)-stranded intermediate. Binds RNA cooperatively with the host ribosomal protein S1. This is RNA-directed RNA polymerase subunit beta from Enterobacteria phage SP (Bacteriophage SP).